Consider the following 60-residue polypeptide: Cytotoxin 10 (60 aa).

Cystine bridges form between Cys-3-Cys-21, Cys-14-Cys-38, Cys-42-Cys-53, and Cys-54-Cys-59.

This sequence belongs to the three-finger toxin family. Short-chain subfamily. Type IA cytotoxin sub-subfamily. Monomer in solution; Homodimer and oligomer in the presence of negatively charged lipids forming a pore with a size ranging between 20 and 30 Angstroms. In terms of tissue distribution, expressed by the venom gland.

Its subcellular location is the secreted. It localises to the target cell membrane. Shows cytolytic activity on many different cells by forming pore in lipid membranes. In vivo, increases heart rate or kills the animal by cardiac arrest. In addition, it binds to heparin with high affinity, interacts with Kv channel-interacting protein 1 (KCNIP1) in a calcium-independent manner, and binds to integrin alpha-V/beta-3 (ITGAV/ITGB3) with moderate affinity. Has hemolytic activity towards human erythrocytes (EC(50)=0.162 uM) and cytolytic activity towards various cell lines. The chain is Cytotoxin 10 from Naja naja (Indian cobra).